The chain runs to 339 residues: DNA-directed RNA polymerase subunit alpha (339 aa).

The interval 1 to 237 is alpha N-terminal domain (alpha-NTD); sequence MENELMYMNW…EQMNVFINFD (237 aa). Residues 256–339 are alpha C-terminal domain (alpha-CTD); it reads FNENLYRSVN…PPAEDNKEGE (84 aa).

Belongs to the RNA polymerase alpha chain family. In terms of assembly, homodimer. The RNAP catalytic core consists of 2 alpha, 1 beta, 1 beta' and 1 omega subunit. When a sigma factor is associated with the core the holoenzyme is formed, which can initiate transcription.

It carries out the reaction RNA(n) + a ribonucleoside 5'-triphosphate = RNA(n+1) + diphosphate. Functionally, DNA-dependent RNA polymerase catalyzes the transcription of DNA into RNA using the four ribonucleoside triphosphates as substrates. This chain is DNA-directed RNA polymerase subunit alpha, found in Desulfosudis oleivorans (strain DSM 6200 / JCM 39069 / Hxd3) (Desulfococcus oleovorans).